The chain runs to 251 residues: Maleate isomerase (251 aa).

Residues N14, 76 to 78 (CLV), Y133, and N163 each bind substrate. C76 serves as the catalytic Nucleophile. Residue C76 is modified to S-(2-succinyl)cysteine. C194 functions as the Proton donor in the catalytic mechanism. Substrate is bound at residue 195–196 (VQ).

It belongs to the maleate isomerase family. In terms of assembly, homodimer.

It catalyses the reaction maleate = fumarate. In terms of biological role, catalyzes cis-trans isomerization of the C2-C3 double bond in maleate to yield fumarate. Shows a strict specificity for maleate, with no activity detected toward structurally related substrates including citraconate, mesaconate, dimethylmaleate, and maleamide. In Nocardia farcinica (strain IFM 10152), this protein is Maleate isomerase.